The sequence spans 159 residues: RNA pyrophosphohydrolase (159 aa).

The Nudix hydrolase domain occupies 6 to 149 (GFRPNVGIIL…KREVYRRALK (144 aa)). A Nudix box motif is present at residues 38–59 (GGINARETPEEALFRELNEEVG).

This sequence belongs to the Nudix hydrolase family. RppH subfamily. The cofactor is a divalent metal cation.

Accelerates the degradation of transcripts by removing pyrophosphate from the 5'-end of triphosphorylated RNA, leading to a more labile monophosphorylated state that can stimulate subsequent ribonuclease cleavage. In Stutzerimonas stutzeri (strain A1501) (Pseudomonas stutzeri), this protein is RNA pyrophosphohydrolase.